A 434-amino-acid chain; its full sequence is Glutamyl-tRNA reductase (434 aa).

Substrate contacts are provided by residues T52 to R55, S115, E120 to Q122, and Q126. C53 serves as the catalytic Nucleophile. Position 195–200 (G195–I200) interacts with NADP(+).

Belongs to the glutamyl-tRNA reductase family. As to quaternary structure, homodimer.

It carries out the reaction (S)-4-amino-5-oxopentanoate + tRNA(Glu) + NADP(+) = L-glutamyl-tRNA(Glu) + NADPH + H(+). It functions in the pathway porphyrin-containing compound metabolism; protoporphyrin-IX biosynthesis; 5-aminolevulinate from L-glutamyl-tRNA(Glu): step 1/2. Catalyzes the NADPH-dependent reduction of glutamyl-tRNA(Glu) to glutamate 1-semialdehyde (GSA). The protein is Glutamyl-tRNA reductase of Cupriavidus metallidurans (strain ATCC 43123 / DSM 2839 / NBRC 102507 / CH34) (Ralstonia metallidurans).